The primary structure comprises 202 residues: Dephospho-CoA kinase (202 aa).

One can recognise a DPCK domain in the interval 5–202 (ILGLTGGIGS…FYLTLRGGQP (198 aa)). 13–18 (GSGKSA) provides a ligand contact to ATP.

This sequence belongs to the CoaE family.

The protein localises to the cytoplasm. It catalyses the reaction 3'-dephospho-CoA + ATP = ADP + CoA + H(+). Its pathway is cofactor biosynthesis; coenzyme A biosynthesis; CoA from (R)-pantothenate: step 5/5. Functionally, catalyzes the phosphorylation of the 3'-hydroxyl group of dephosphocoenzyme A to form coenzyme A. This Stutzerimonas stutzeri (Pseudomonas stutzeri) protein is Dephospho-CoA kinase.